Reading from the N-terminus, the 577-residue chain is Proline--tRNA ligase (577 aa).

The protein belongs to the class-II aminoacyl-tRNA synthetase family. ProS type 1 subfamily. Homodimer.

The protein resides in the cytoplasm. It carries out the reaction tRNA(Pro) + L-proline + ATP = L-prolyl-tRNA(Pro) + AMP + diphosphate. In terms of biological role, catalyzes the attachment of proline to tRNA(Pro) in a two-step reaction: proline is first activated by ATP to form Pro-AMP and then transferred to the acceptor end of tRNA(Pro). As ProRS can inadvertently accommodate and process non-cognate amino acids such as alanine and cysteine, to avoid such errors it has two additional distinct editing activities against alanine. One activity is designated as 'pretransfer' editing and involves the tRNA(Pro)-independent hydrolysis of activated Ala-AMP. The other activity is designated 'posttransfer' editing and involves deacylation of mischarged Ala-tRNA(Pro). The misacylated Cys-tRNA(Pro) is not edited by ProRS. In Helicobacter pylori (strain Shi470), this protein is Proline--tRNA ligase.